The chain runs to 82 residues: Sulfur carrier protein TusA (82 aa).

Cys-19 serves as the catalytic Cysteine persulfide intermediate.

This sequence belongs to the sulfur carrier protein TusA family. In terms of assembly, interacts with IscS.

Its subcellular location is the cytoplasm. It functions in the pathway tRNA modification. In terms of biological role, sulfur carrier protein involved in sulfur trafficking in the cell. Part of a sulfur-relay system required for 2-thiolation during synthesis of 2-thiouridine of the modified wobble base 5-methylaminomethyl-2-thiouridine (mnm(5)s(2)U) in tRNA. Interacts with IscS and stimulates its cysteine desulfurase activity. Accepts an activated sulfur from IscS, which is then transferred to TusD, and thus determines the direction of sulfur flow from IscS to 2-thiouridine formation. Also appears to be involved in sulfur transfer for the biosynthesis of molybdopterin. This Edwardsiella ictaluri (strain 93-146) protein is Sulfur carrier protein TusA.